The following is a 326-amino-acid chain: MTAFHSVAVIGAGAWGTALAMVAARAGRSVTLWARNAEHATRIASTRDNPRLPGVRLAPDIVVTSELALAARADMLLIATPAQHLRGAVNMLASHIARPTPVVACAKGIEHGTHKFMTEVIAEAALHAQPAILSGPSFADDVARGLPTAVTLAAKEEELASSLVQALGSPTFRPYHSTDVRGVEIGGAAKNVLAIAAGIVVGRNLGASALAALTTRGFSELARLGRACGARPETLSGLSGLGDLLLSCSTAQSRNFALGIALGRGEAAPAGKLAEGAFTAPVLVELAAARNVDMPVSQAVAAILDNKLTIDAAIEGLLTRPFKAEE.

NADPH-binding residues include tryptophan 15, arginine 35, and lysine 107. Sn-glycerol 3-phosphate-binding residues include lysine 107, glycine 135, and serine 137. An NADPH-binding site is contributed by alanine 139. Sn-glycerol 3-phosphate is bound by residues lysine 190, aspartate 243, serine 253, arginine 254, and asparagine 255. Lysine 190 acts as the Proton acceptor in catalysis. Residue arginine 254 coordinates NADPH. 2 residues coordinate NADPH: leucine 273 and glutamate 275.

The protein belongs to the NAD-dependent glycerol-3-phosphate dehydrogenase family.

It is found in the cytoplasm. It carries out the reaction sn-glycerol 3-phosphate + NAD(+) = dihydroxyacetone phosphate + NADH + H(+). The enzyme catalyses sn-glycerol 3-phosphate + NADP(+) = dihydroxyacetone phosphate + NADPH + H(+). It functions in the pathway membrane lipid metabolism; glycerophospholipid metabolism. Functionally, catalyzes the reduction of the glycolytic intermediate dihydroxyacetone phosphate (DHAP) to sn-glycerol 3-phosphate (G3P), the key precursor for phospholipid synthesis. This is Glycerol-3-phosphate dehydrogenase [NAD(P)+] from Bradyrhizobium diazoefficiens (strain JCM 10833 / BCRC 13528 / IAM 13628 / NBRC 14792 / USDA 110).